The chain runs to 397 residues: Decapping and exoribonuclease protein (397 aa).

The segment covering 1-10 (MEPRGTKRKA) has biased composition (basic residues). Residues 1-30 (MEPRGTKRKAEKTEVEKPLNKLPRAVPSLR) form a disordered region. Substrate is bound by residues R58, E101, and 131-133 (WRG). M185 lines the adenosine 3',5'-bisphosphate pocket. E192 serves as a coordination point for Mg(2+). Positions 217 and 234 each coordinate substrate. Positions 234, 236, 253, and 254 each coordinate Mg(2+). Residue D236 coordinates adenosine 3',5'-bisphosphate. Residues 253 to 256 (ELKT) are adenosine 3',5'-bisphosphate; inhibitor. K255 and Q280 together coordinate substrate. Adenosine 3',5'-bisphosphate is bound at residue Q280. A Phosphothreonine modification is found at T392. S394 is subject to Phosphoserine.

The protein belongs to the DXO/Dom3Z family. Mg(2+) serves as cofactor.

It is found in the nucleus. The enzyme catalyses a 5'-end triphospho-ribonucleoside in mRNA + H2O = a 5'-end phospho-ribonucleoside in mRNA + diphosphate + H(+). The catalysed reaction is a 5'-end NAD(+)-phospho-ribonucleoside in mRNA + H2O = a 5'-end phospho-ribonucleoside in mRNA + NAD(+) + H(+). It catalyses the reaction a 5'-end NAD(+)-phospho-ribonucleoside in snoRNA + H2O = a 5'-end phospho-ribonucleoside in snoRNA + NAD(+) + H(+). It carries out the reaction a 5'-end (N(7)-methyl 5'-triphosphoguanosine)-ribonucleoside-ribonucleotide in mRNA + H2O = a (N(7)-methyl 5'-triphosphoguanosine)-nucleoside + a 5'-end phospho-ribonucleoside in mRNA + H(+). The enzyme catalyses a 5'-end FAD-phospho-ribonucleoside in mRNA + H2O = a 5'-end phospho-ribonucleoside in mRNA + FAD + H(+). The catalysed reaction is a 5'-end CoA-ribonucleoside in mRNA + H2O = 3'-dephospho-CoA + a 5'-end phospho-ribonucleoside in mRNA + H(+). With respect to regulation, the 5'-3' exoribonuclease activity is inhibited by adenosine 3',5'-bisphosphate. In terms of biological role, decapping enzyme for NAD-capped RNAs: specifically hydrolyzes the nicotinamide adenine dinucleotide (NAD) cap from a subset of RNAs by removing the entire NAD moiety from the 5'-end of an NAD-capped RNA. The NAD-cap is present at the 5'-end of some RNAs and snoRNAs. In contrast to the canonical 5'-end N7 methylguanosine (m7G) cap, the NAD cap promotes mRNA decay. Preferentially acts on NAD-capped transcripts in response to environmental stress. Also acts as a non-canonical decapping enzyme that removes the entire cap structure of m7G capped or incompletely capped RNAs and mediates their subsequent degradation. Specifically degrades pre-mRNAs with a defective 5'-end m7G cap and is part of a pre-mRNA capping quality control. Has decapping activity toward incomplete 5'-end m7G cap mRNAs such as unmethylated 5'-end-capped RNA (cap0), while it has no activity toward 2'-O-ribose methylated m7G cap (cap1). In contrast to canonical decapping enzymes DCP2 and NUDT16, which cleave the cap within the triphosphate linkage, the decapping activity releases the entire cap structure GpppN and a 5'-end monophosphate RNA. Also has 5'-3' exoribonuclease activities: The 5'-end monophosphate RNA is then degraded by the 5'-3' exoribonuclease activity, enabling this enzyme to decap and degrade incompletely capped mRNAs. Also possesses RNA 5'-pyrophosphohydrolase activity by hydrolyzing the 5'-end triphosphate to release pyrophosphates. Exhibits decapping activity towards FAD-capped RNAs. Exhibits decapping activity towards dpCoA-capped RNAs in vitro. The polypeptide is Decapping and exoribonuclease protein (Mus musculus (Mouse)).